We begin with the raw amino-acid sequence, 304 residues long: Transcription factor bHLH94 (304 aa).

Residues V86–K107 are disordered. A compositionally biased stretch (basic residues) spans P92–C104. The bHLH domain occupies N112 to L163.

In terms of assembly, homodimer. Expressed constitutively in roots, leaves, stems, and flowers.

It is found in the nucleus. The protein is Transcription factor bHLH94 (BHLH94) of Arabidopsis thaliana (Mouse-ear cress).